Consider the following 530-residue polypeptide: AA9 family lytic polysaccharide monooxygenase C (530 aa).

Residues 1–18 (MQLKSTVHFLSLLAYTAA) form the signal peptide. 2 residues coordinate Cu(2+): His-19 and His-103. 2 disulfides stabilise this stretch: Cys-72-Cys-190 and Cys-114-Cys-118. Residue Asn-150 is glycosylated (N-linked (GlcNAc...) asparagine). O2 is bound at residue Gln-185. Tyr-187 provides a ligand contact to Cu(2+). The span at 238 to 251 (YGSGSSSSQNSVES) shows a compositional bias: low complexity. Disordered regions lie at residues 238–279 (YGSG…STSA), 297–329 (ESSS…SSSA), 348–375 (YSSA…KLSS), and 492–512 (GNGA…GTTP). The span at 312-324 (KSVEAKETTKVEE) shows a compositional bias: basic and acidic residues. The span at 348-368 (YSSASPSSSPVLSSSKPASTS) shows a compositional bias: low complexity.

It belongs to the polysaccharide monooxygenase AA9 family. The cofactor is Cu(2+).

Its subcellular location is the secreted. The catalysed reaction is [(1-&gt;4)-beta-D-glucosyl]n+m + reduced acceptor + O2 = 4-dehydro-beta-D-glucosyl-[(1-&gt;4)-beta-D-glucosyl]n-1 + [(1-&gt;4)-beta-D-glucosyl]m + acceptor + H2O.. Lytic polysaccharide monooxygenase (LPMO) that depolymerizes polysaccharides via the oxidation of scissile alpha- or beta-(1-4)-glycosidic bonds, yielding C1 or C4 oxidation products. Catalysis by LPMOs requires the reduction of the active-site copper from Cu(II) to Cu(I) by a reducing agent and H(2)O(2) or O(2) as a cosubstrate. Amorphous cellulose is not a suitable substrate for LPMO9C, which may act at the surface of cellulose microfibrils without any release of soluble products. This chain is AA9 family lytic polysaccharide monooxygenase C, found in Geotrichum candidum (Oospora lactis).